The chain runs to 63 residues: Odorranain-B1 (63 aa).

A signal peptide spans 1-22 (MFTTKKPLLLLFFLGIISLSVC). The propeptide occupies 23–41 (EQERDADEEDGGEVTEEEV).

Belongs to the frog skin active peptide (FSAP) family. Brevinin subfamily. As to expression, expressed by the skin glands.

It is found in the secreted. The sequence is that of Odorranain-B1 from Odorrana hainanensis (Odor frog).